A 311-amino-acid chain; its full sequence is DNA-directed RNA polymerase subunit alpha (311 aa).

Residues 1–227 (MAQFQIECIE…NLFCSLRNLD (227 aa)) form an alpha N-terminal domain (alpha-NTD) region. Residues 239–311 (DKKISQVLIE…GISLPKEKSD (73 aa)) form an alpha C-terminal domain (alpha-CTD) region.

Belongs to the RNA polymerase alpha chain family. In terms of assembly, in plastids the minimal PEP RNA polymerase catalytic core is composed of four subunits: alpha, beta, beta', and beta''. When a (nuclear-encoded) sigma factor is associated with the core the holoenzyme is formed, which can initiate transcription.

It localises to the plastid. The protein resides in the chloroplast. It catalyses the reaction RNA(n) + a ribonucleoside 5'-triphosphate = RNA(n+1) + diphosphate. Functionally, DNA-dependent RNA polymerase catalyzes the transcription of DNA into RNA using the four ribonucleoside triphosphates as substrates. This Pyropia yezoensis (Susabi-nori) protein is DNA-directed RNA polymerase subunit alpha.